We begin with the raw amino-acid sequence, 342 residues long: Platelet-activating factor receptor (342 aa).

Residues 1–16 (MELNSSSRVDSEFRYT) are Extracellular-facing. Asparagine 4 carries N-linked (GlcNAc...) asparagine glycosylation. Residues 17 to 38 (LFPIVYSIIFVLGIIANGYVLW) traverse the membrane as a helical segment. Over 39-54 (VFARLYPSKKLNEIKI) the chain is Cytoplasmic. A helical transmembrane segment spans residues 55-74 (FMVNLTVADLLFLITLPLWI). Residues 75 to 91 (VYYSNQGNWFLPKFLCN) lie on the Extracellular side of the membrane. Cysteine 90 and cysteine 173 form a disulfide bridge. The helical transmembrane segment at 92–113 (LAGCLFFINTYCSVAFLGVITY) threads the bilayer. Topologically, residues 114–133 (NRFQAVKYPIKTAQATTRKR) are cytoplasmic. The chain crosses the membrane as a helical span at residues 134 to 155 (GIALSLVIWVAIVAAASYFLVM). Residues 156-184 (DSTNVVSNKAGSGNITRCFEHYEKGSKPV) lie on the Extracellular side of the membrane. Asparagine 169 is a glycosylation site (N-linked (GlcNAc...) asparagine). The chain crosses the membrane as a helical span at residues 185–205 (LIIHICIVLGFFIVFLLILFC). Residues 206–233 (NLVIIHTLLRQPVKQQRNAEVRRRALWM) are Cytoplasmic-facing. Residues 234 to 254 (VCTVLAVFVICFVPHHMVQLP) traverse the membrane as a helical segment. Over 255 to 276 (WTLAELGMWPSSNHQAINDAHQ) the chain is Extracellular. Residues 277–296 (VTLCLLSTNCVLDPVIYCFL) form a helical membrane-spanning segment. Residues 297–342 (TKKFRKHLSEKLNIMRSSQKCSRVTTDTGTEMAIPINHTPVNPIKN) are Cytoplasmic-facing.

It belongs to the G-protein coupled receptor 1 family. Interacts with ARRB1.

It is found in the cell membrane. Functionally, receptor for platelet activating factor, a chemotactic phospholipid mediator that possesses potent inflammatory, smooth-muscle contractile and hypotensive activity. Seems to mediate its action via a G protein that activates a phosphatidylinositol-calcium second messenger system. This Cavia porcellus (Guinea pig) protein is Platelet-activating factor receptor (PTAFR).